The chain runs to 254 residues: Ribosomal RNA small subunit methyltransferase G (254 aa).

Residues 1-21 (MPEGDGVPRETPSPSVVPESP) form a disordered region. The span at 9-21 (RETPSPSVVPESP) shows a compositional bias: low complexity. S-adenosyl-L-methionine contacts are provided by residues Gly-90, Leu-95, 142–143 (AE), and Arg-157. Residues 230–254 (GPLRAATAPAPPGAAKRRPGKGNRR) are disordered. Residues 244 to 254 (AKRRPGKGNRR) show a composition bias toward basic residues.

The protein belongs to the methyltransferase superfamily. RNA methyltransferase RsmG family.

It is found in the cytoplasm. Specifically methylates the N7 position of guanine in position 518 of 16S rRNA. This chain is Ribosomal RNA small subunit methyltransferase G, found in Kineococcus radiotolerans (strain ATCC BAA-149 / DSM 14245 / SRS30216).